The primary structure comprises 563 residues: (R)-mandelonitrile lyase 1 (563 aa).

The signal sequence occupies residues 1 to 27 (MEKSTMSAILLVLHLFVLLLQYSEVHS). FAD contacts are provided by residues 63-64 (TS), 82-83 (ER), valine 129, threonine 133, and 137-140 (NAGV). 2 N-linked (GlcNAc...) asparagine glycosylation sites follow: asparagine 145 and asparagine 162. Valine 244 lines the FAD pocket. Substrate is bound at residue cysteine 355. The N-linked (GlcNAc...) asparagine glycan is linked to asparagine 379. Cysteine 426 and cysteine 477 are joined by a disulfide. Tyrosine 484 lines the substrate pocket. FAD-binding positions include 485–486 (WH) and glycine 514. Histidine 486 serves as the catalytic Proton donor. Residue histidine 524 is the Proton acceptor of the active site. 525–526 (PQ) serves as a coordination point for FAD.

This sequence belongs to the GMC oxidoreductase family. In terms of assembly, monomer. Requires FAD as cofactor. Post-translationally, glycosylated. As to expression, seeds. Localized within cotyledonary parenchyma cells.

It localises to the vacuole. The protein resides in the aleurone grain. The enzyme catalyses (R)-mandelonitrile = benzaldehyde + hydrogen cyanide. Involved in cyanogenesis, the release of HCN from injured tissues. Catalyzes the stereospecific addition of HCN to a variety of aldehydes in vitro. It is a major seed constituent, and could have the additional role of a storage form for reduced nitrogen. The chain is (R)-mandelonitrile lyase 1 (MDL1) from Prunus serotina (Black cherry).